Reading from the N-terminus, the 256-residue chain is Probable elongation factor 1-delta (256 aa).

Phosphoserine is present on residues S37, S53, and S89. Residues 110–146 (NGVSKEPEVEAKKPEANDDDDDVDLFGSDSEEEDGEA) are disordered. Positions 114 to 125 (KEPEVEAKKPEA) are enriched in basic and acidic residues. Residues 126–144 (NDDDDDVDLFGSDSEEEDG) are compositionally biased toward acidic residues. Phosphoserine is present on residues S137 and S139.

Belongs to the EF-1-beta/EF-1-delta family. As to quaternary structure, EF-1 is composed of 4 subunits: alpha, beta, delta, and gamma.

In terms of biological role, EF-1-beta and EF-1-delta stimulate the exchange of GDP bound to EF-1-alpha to GTP. The protein is Probable elongation factor 1-delta (eEF1delta) of Drosophila melanogaster (Fruit fly).